A 1369-amino-acid polypeptide reads, in one-letter code: DNA-directed RNA polymerase subunit beta' (1369 aa).

The disordered stretch occupies residues 1 to 43 (MTSSSPKTRKSSTKSKAKRGSKSKKAAEIKAVQRLSKTPPPFR). The segment covering 7-24 (KTRKSSTKSKAKRGSKSK) has biased composition (basic residues). The Zn(2+) site is built by C253, C320, C327, and C330. Residues 1294 to 1369 (TVDMPSSPVA…LQEEGLLSDE (76 aa)) are disordered. Acidic residues predominate over residues 1342-1351 (DDELSAEDQM). The span at 1357-1369 (LEGLQEEGLLSDE) shows a compositional bias: low complexity.

This sequence belongs to the RNA polymerase beta' chain family. RpoC2 subfamily. In terms of assembly, in cyanobacteria the RNAP catalytic core is composed of 2 alpha, 1 beta, 1 beta', 1 gamma and 1 omega subunit. When a sigma factor is associated with the core the holoenzyme is formed, which can initiate transcription. Zn(2+) is required as a cofactor.

The catalysed reaction is RNA(n) + a ribonucleoside 5'-triphosphate = RNA(n+1) + diphosphate. In terms of biological role, DNA-dependent RNA polymerase catalyzes the transcription of DNA into RNA using the four ribonucleoside triphosphates as substrates. This Prochlorococcus marinus (strain NATL1A) protein is DNA-directed RNA polymerase subunit beta'.